The chain runs to 104 residues: Fluoride-specific ion channel FluC 2 (104 aa).

3 helical membrane-spanning segments follow: residues 22–42, 48–68, and 82–102; these read IGPY…LAAV, LVMA…STLA, and MLLG…WCGL. The Na(+) site is built by Gly59 and Ser62.

This sequence belongs to the fluoride channel Fluc/FEX (TC 1.A.43) family.

It is found in the cell membrane. It carries out the reaction fluoride(in) = fluoride(out). With respect to regulation, na(+) is not transported, but it plays an essential structural role and its presence is essential for fluoride channel function. Functionally, fluoride-specific ion channel. Important for reducing fluoride concentration in the cell, thus reducing its toxicity. The protein is Fluoride-specific ion channel FluC 2 of Corynebacterium diphtheriae (strain ATCC 700971 / NCTC 13129 / Biotype gravis).